We begin with the raw amino-acid sequence, 393 residues long: S-adenosylmethionine synthase (393 aa).

Glutamate 9 is a binding site for Mg(2+). Histidine 15 serves as a coordination point for ATP. Glutamate 43 contributes to the K(+) binding site. L-methionine-binding residues include glutamate 56 and glutamine 99. ATP contacts are provided by residues 167 to 169 (DGK), 235 to 238 (SGRF), aspartate 246, 252 to 253 (RK), alanine 269, lysine 273, and lysine 277. Aspartate 246 is a binding site for L-methionine. Residue lysine 277 coordinates L-methionine.

The protein belongs to the AdoMet synthase family. In terms of assembly, homotetramer. Requires Mn(2+) as cofactor. It depends on Mg(2+) as a cofactor. The cofactor is Co(2+). K(+) is required as a cofactor.

The protein resides in the cytoplasm. The enzyme catalyses L-methionine + ATP + H2O = S-adenosyl-L-methionine + phosphate + diphosphate. The protein operates within amino-acid biosynthesis; S-adenosyl-L-methionine biosynthesis; S-adenosyl-L-methionine from L-methionine: step 1/1. Catalyzes the formation of S-adenosylmethionine from methionine and ATP. The reaction comprises two steps that are both catalyzed by the same enzyme: formation of S-adenosylmethionine (AdoMet) and triphosphate, and subsequent hydrolysis of the triphosphate. This is S-adenosylmethionine synthase (SAM) from Camellia sinensis (Tea plant).